A 727-amino-acid chain; its full sequence is Iron-sulfur clusters transporter ATM1, mitochondrial (727 aa).

The transit peptide at 1 to 25 (MLIGGAQNRLYQLRTSNILGLLRTR) directs the protein to the mitochondrion. Over 26–138 (SALRVGSKVE…PRGNTKVKVR (113 aa)) the chain is Mitochondrial matrix. Residues 87–107 (KSKLPNEDTAHNASEKNSKKT) are disordered. Over residues 90–107 (LPNEDTAHNASEKNSKKT) the composition is skewed to basic and acidic residues. A helical membrane pass occupies residues 139 to 160 (VLLALALLIGAKVLNVQVPFFF). Positions 139–429 (VLLALALLIG…LGSVYRELKQ (291 aa)) constitute an ABC transmembrane type-1 domain. Topologically, residues 161–183 (KQIIDGMNVDWSDATVALPAALG) are mitochondrial intermembrane. A helical membrane pass occupies residues 184-207 (LTIMCYGLARFGAVLFGELRNAIF). Residues 208-256 (ARVAQNAIRNVSLQTFEHLMKLDLGWHLSRQTGGLTRAMDRGTKGISYV) lie on the Mitochondrial matrix side of the membrane. A helical membrane pass occupies residues 257 to 280 (LSAMVFHIIPITFEISVVCGILTY). Residue Gln281 is a topological domain, mitochondrial intermembrane. The helical transmembrane segment at 282–302 (FGASFAGITFTTMLLYSIFTI) threads the bilayer. Over 303–368 (RTTAWRTRFR…SQVKVAQSLA (66 aa)) the chain is Mitochondrial matrix. Residues 308–312 (RTRFR) and 371–374 (NSGQ) contribute to the glutathione site. Residues 369 to 387 (FLNSGQSLIFTTALTGMMY) form a helical membrane-spanning segment. Residues 388–402 (MGCTGVIGGDLTVGD) are Mitochondrial intermembrane-facing. A helical transmembrane segment spans residues 403 to 424 (LVLINQLVFQLSVPLNFLGSVY). Residue Gly421 participates in glutathione binding. The Mitochondrial matrix segment spans residues 425 to 727 (RELKQSLIDM…ETLEKLNKSI (303 aa)). The region spanning 465 to 701 (IKFENVTFGY…ENSLYKELWR (237 aa)) is the ABC transporter domain. ATP is bound by residues Tyr474 and 498-509 (GPSGSGKSTVLK).

This sequence belongs to the ABC transporter superfamily. ABCB family. Heavy Metal importer (TC 3.A.1.210) subfamily. Homodimer.

It is found in the mitochondrion inner membrane. In terms of biological role, performs an essential function in the generation of cytoplasmic iron-sulfur proteins by mediating the ATP-dependent export of Fe/S cluster precursors synthesized by NFS1 and other mitochondrial proteins. Hydrolyzes ATP. Binds glutathione and may function by transporting a glutathione-conjugated iron-sulfur compound. This Candida glabrata (strain ATCC 2001 / BCRC 20586 / JCM 3761 / NBRC 0622 / NRRL Y-65 / CBS 138) (Yeast) protein is Iron-sulfur clusters transporter ATM1, mitochondrial.